A 938-amino-acid polypeptide reads, in one-letter code: RIPOR family member 3 (938 aa).

Phosphoserine is present on residues serine 9, serine 24, and serine 340. A Phosphothreonine modification is found at threonine 345. Serine 351 and serine 384 each carry phosphoserine. 2 disordered regions span residues 402 to 430 and 579 to 603; these read EMDS…FLPV and FGGS…SPSE.

The protein belongs to the RIPOR family.

In Mus musculus (Mouse), this protein is RIPOR family member 3.